A 291-amino-acid polypeptide reads, in one-letter code: Malolactic fermentation system transcriptional activator (291 aa).

Residues 1–60 (MSLNLRDLEYFYQLSKLRSFTNVAKHFRVSQPTISYAIKRLETYYDCDLFYKDSSHQVVD) form the HTH lysR-type domain. The segment at residues 20-39 (FTNVAKHFRVSQPTISYAIK) is a DNA-binding region (H-T-H motif).

The protein belongs to the LysR transcriptional regulatory family.

Its subcellular location is the cytoplasm. Required for malolactic fermentation. It is most probably a transcriptional activator. This chain is Malolactic fermentation system transcriptional activator (mleR), found in Lactococcus lactis subsp. lactis (strain IL1403) (Streptococcus lactis).